Reading from the N-terminus, the 147-residue chain is MHDAELVLKCWGGVEADFEGTGGEVLTRLFKQHPETQKLFPKFVGIASNELAGNAAVKAHGATVLKKLGELLKARGDHAAILKPLATTHANTHKIALNNFRLITEVLVKVMAEKAGLDAGGQSALRRVMDVVIGDIDTYYKEIGFAG.

Residues 2 to 141 form the Globin domain; that stretch reads HDAELVLKCW…VIGDIDTYYK (140 aa). H60 is a binding site for nitrite. H60 is an O2 binding site. A heme b-binding site is contributed by H89.

Belongs to the globin family. Monomeric.

Its subcellular location is the cytoplasm. The protein localises to the sarcoplasm. It carries out the reaction Fe(III)-heme b-[protein] + nitric oxide + H2O = Fe(II)-heme b-[protein] + nitrite + 2 H(+). The catalysed reaction is H2O2 + AH2 = A + 2 H2O. Its function is as follows. Monomeric heme protein which primary function is to store oxygen and facilitate its diffusion within muscle tissues. Reversibly binds oxygen through a pentacoordinated heme iron and enables its timely and efficient release as needed during periods of heightened demand. Depending on the oxidative conditions of tissues and cells, and in addition to its ability to bind oxygen, it also has a nitrite reductase activity whereby it regulates the production of bioactive nitric oxide. Under stress conditions, like hypoxia and anoxia, it also protects cells against reactive oxygen species thanks to its pseudoperoxidase activity. This is Myoglobin (mb) from Cyprinus carpio (Common carp).